Here is a 146-residue protein sequence, read N- to C-terminus: ATP synthase epsilon chain (146 aa).

The interval 103-124 (QAERELGQLPEEEDEDSRRARE) is disordered.

The protein belongs to the ATPase epsilon chain family. In terms of assembly, F-type ATPases have 2 components, CF(1) - the catalytic core - and CF(0) - the membrane proton channel. CF(1) has five subunits: alpha(3), beta(3), gamma(1), delta(1), epsilon(1). CF(0) has three main subunits: a, b and c.

It localises to the cell membrane. Functionally, produces ATP from ADP in the presence of a proton gradient across the membrane. This chain is ATP synthase epsilon chain, found in Rubrobacter xylanophilus (strain DSM 9941 / JCM 11954 / NBRC 16129 / PRD-1).